A 418-amino-acid chain; its full sequence is tRNA-2-methylthio-N(6)-dimethylallyladenosine synthase (418 aa).

Residues 2–118 form the MTTase N-terminal domain; that stretch reads PGYYLWTIGC…WGEIPEGFIL (117 aa). [4Fe-4S] cluster is bound by residues C11, C47, C81, C134, C138, and C141. The Radical SAM core domain occupies 120 to 352; that stretch reads LKPPVSASIT…DLQKETVSKA (233 aa). A TRAM domain is found at 354–414; that stretch reads SALVDTFAEV…PWSLQAKLVK (61 aa).

It belongs to the methylthiotransferase family. MiaB subfamily. As to quaternary structure, monomer. It depends on [4Fe-4S] cluster as a cofactor.

The protein resides in the cytoplasm. The enzyme catalyses N(6)-dimethylallyladenosine(37) in tRNA + (sulfur carrier)-SH + AH2 + 2 S-adenosyl-L-methionine = 2-methylsulfanyl-N(6)-dimethylallyladenosine(37) in tRNA + (sulfur carrier)-H + 5'-deoxyadenosine + L-methionine + A + S-adenosyl-L-homocysteine + 2 H(+). Its function is as follows. Catalyzes the methylthiolation of N6-(dimethylallyl)adenosine (i(6)A), leading to the formation of 2-methylthio-N6-(dimethylallyl)adenosine (ms(2)i(6)A) at position 37 in tRNAs that read codons beginning with uridine. This chain is tRNA-2-methylthio-N(6)-dimethylallyladenosine synthase, found in Dehalococcoides mccartyi (strain ATCC BAA-2266 / KCTC 15142 / 195) (Dehalococcoides ethenogenes (strain 195)).